The sequence spans 127 residues: Protein HI_1253 (127 aa).

4 helical membrane passes run 13 to 33 (VIML…LLVI), 61 to 81 (LIVS…WWLV), 82 to 102 (AKFA…SKKV), and 107 to 127 (SIFF…AYLK).

It belongs to the SirB2 family.

The protein localises to the cell inner membrane. The chain is Protein HI_1253 from Haemophilus influenzae (strain ATCC 51907 / DSM 11121 / KW20 / Rd).